We begin with the raw amino-acid sequence, 71 residues long: High-potential iron-sulfur protein (71 aa).

Pyrrolidone carboxylic acid is present on Q1. [4Fe-4S] cluster is bound by residues C37, C40, C50, and C64.

This sequence belongs to the high-potential iron-sulfur protein (HiPIP) family. In terms of assembly, homodimer.

Specific class of high-redox-potential 4Fe-4S ferredoxins. Functions in anaerobic electron transport in most purple and in some other photosynthetic bacteria and in at least one genus (Paracoccus) of halophilic, denitrifying bacteria. In Halomonas halodenitrificans (strain ATCC 12084 / NCIMB 8669) (Paracoccus halodenitrificans), this protein is High-potential iron-sulfur protein (hip).